Here is a 200-residue protein sequence, read N- to C-terminus: Large ribosomal subunit protein uL4 (200 aa).

Positions 38 to 67 (GRQGSKAQKTRSEVSGGGKKPWRQKGTGRA) are disordered.

The protein belongs to the universal ribosomal protein uL4 family. In terms of assembly, part of the 50S ribosomal subunit.

Its function is as follows. One of the primary rRNA binding proteins, this protein initially binds near the 5'-end of the 23S rRNA. It is important during the early stages of 50S assembly. It makes multiple contacts with different domains of the 23S rRNA in the assembled 50S subunit and ribosome. Forms part of the polypeptide exit tunnel. In Pseudomonas paraeruginosa (strain DSM 24068 / PA7) (Pseudomonas aeruginosa (strain PA7)), this protein is Large ribosomal subunit protein uL4.